The chain runs to 335 residues: Glyceraldehyde-3-phosphate dehydrogenase (335 aa).

Residues 12-13, Asp34, and Lys79 contribute to the NAD(+) site; that span reads RI. Residues 150–152, Thr181, 210–211, and Arg233 each bind D-glyceraldehyde 3-phosphate; these read SCT and TG. Cys151 serves as the catalytic Nucleophile. Asn315 provides a ligand contact to NAD(+).

It belongs to the glyceraldehyde-3-phosphate dehydrogenase family. Homotetramer.

Its subcellular location is the cytoplasm. It catalyses the reaction D-glyceraldehyde 3-phosphate + phosphate + NAD(+) = (2R)-3-phospho-glyceroyl phosphate + NADH + H(+). The protein operates within carbohydrate degradation; glycolysis; pyruvate from D-glyceraldehyde 3-phosphate: step 1/5. The protein is Glyceraldehyde-3-phosphate dehydrogenase (GPD) of Debaryomyces hansenii (strain ATCC 36239 / CBS 767 / BCRC 21394 / JCM 1990 / NBRC 0083 / IGC 2968) (Yeast).